Consider the following 142-residue polypeptide: Large ribosomal subunit protein uL13 (142 aa).

It belongs to the universal ribosomal protein uL13 family. In terms of assembly, part of the 50S ribosomal subunit.

This protein is one of the early assembly proteins of the 50S ribosomal subunit, although it is not seen to bind rRNA by itself. It is important during the early stages of 50S assembly. The sequence is that of Large ribosomal subunit protein uL13 from Pseudomonas paraeruginosa (strain DSM 24068 / PA7) (Pseudomonas aeruginosa (strain PA7)).